A 471-amino-acid polypeptide reads, in one-letter code: 3-hydroxylaminophenol mutase (471 aa).

Residues 15 to 100 (NDVKFVDFRF…TCDVVEPSDG (86 aa)) enclose the GS beta-grasp domain. Residues 107-471 (PRSIAKRAEA…PVEFEMYYSL (365 aa)) enclose the GS catalytic domain.

It belongs to the glutamine synthetase family.

The catalysed reaction is 3-hydroxyaminophenol = aminohydroquinone. Is inhibited by H(2)O(2). 1,10-phenanthroline inhibits the activity slightly, but other metal cation chelators such as EDTA or tiron have no effect on the activity. Divalent metal cations and hydroxylamine have also no effect on the activity. Due to the relationship of the protein with glutamine synthetases, glutamate and glutamine were tested as inhibitors; neither preincubation of the compounds with the enzyme nor their addition to the assay buffer affected 3HAP mutase activity. Functionally, catalyzes the isomerization of 3-hydroxylaminophenol (3HAP) to aminohydroquinone, a step in the degradative pathway of 3-nitrophenol. The enzymatic reaction is regiospecific since it leads to the formation of aminohydroquinone exclusively, without producing the isomeric 4-aminocatechol. Can also isomerize other hydroxylaminoaromatic compounds, such as hydroxylaminobenzene to a mixture of 2-aminophenol and 4-aminophenol, 4-hydroxylaminotoluene to 6-amino-m-cresol, and 2-chloro-5-hydroxylaminophenol to 2-amino-5-chlorohydroquinone. Does not act on 4-hydroxylaminobenzoate. The protein is 3-hydroxylaminophenol mutase of Cupriavidus pinatubonensis (strain JMP 134 / LMG 1197) (Cupriavidus necator (strain JMP 134)).